The primary structure comprises 127 residues: Large ribosomal subunit protein bL17 (127 aa).

The protein belongs to the bacterial ribosomal protein bL17 family. As to quaternary structure, part of the 50S ribosomal subunit. Contacts protein L32.

The polypeptide is Large ribosomal subunit protein bL17 (Legionella pneumophila (strain Paris)).